Here is a 375-residue protein sequence, read N- to C-terminus: Platelet-derived growth factor receptor-like protein (375 aa).

The signal sequence occupies residues 1–21; the sequence is MKVWLLLGLLLVHEALEDVTG. The disordered stretch occupies residues 22 to 64; the sequence is QHLPKNKRPKEPGENRIKPTNKKVKPKIPKIKDRDSADSTPKT. Positions 40–50 are enriched in basic residues; the sequence is PTNKKVKPKIP. In terms of domain architecture, Ig-like C2-type 1 spans 62–159; it reads PKTQSIMMQV…GYICRKDETK (98 aa). An intrachain disulfide couples cysteine 96 to cysteine 143. Residues asparagine 132 and asparagine 219 are each glycosylated (N-linked (GlcNAc...) asparagine). Residues 272 to 375 enclose the Ig-like C2-type 2 domain; that stretch reads PSTTILASSN…TTVATTVEFS (104 aa). Cysteine 293 and cysteine 357 are disulfide-bonded.

As to quaternary structure, forms a complex composed of PDGFRL, TNK2 and GRB2.

It is found in the secreted. This is Platelet-derived growth factor receptor-like protein (PDGFRL) from Macaca fascicularis (Crab-eating macaque).